Here is a 987-residue protein sequence, read N- to C-terminus: Mitotic checkpoint serine/threonine-protein kinase bub-1 (987 aa).

Disordered stretches follow at residues 278 to 385 and 574 to 599; these read RRRH…TSKS and LAAN…KDSS. Residues 350–364 are compositionally biased toward basic and acidic residues; the sequence is ERLKIMTAGRKDGNP. Residues 368 to 380 show a composition bias toward low complexity; the sequence is STSISSNYSTASA. Over residues 575 to 587 the composition is skewed to polar residues; it reads AANQAVQPSVTES. The segment covering 588–599 has biased composition (basic and acidic residues); sequence SKPERSDPKDSS. The region spanning 690 to 987 is the Protein kinase domain; it reads LHIQTLIGQG…EACDLAANQK (298 aa). Residues 696-704 and K718 contribute to the ATP site; that span reads IGQGGYAKV. The Proton acceptor role is filled by D814.

It belongs to the protein kinase superfamily. Ser/Thr protein kinase family. BUB1 subfamily. In terms of assembly, interacts (via kinase domain) with mdf-1 (via coiled coil domain); the interaction recruits mdf-1 to unattached kinetochores during mitosis and between homologous chromosomes in early anaphase of meiosis I. May interact with bub-3; for localization at the kinetochore and the onset of anaphase.

The protein localises to the cytoplasm. It is found in the cell cortex. Its subcellular location is the nucleus. It localises to the chromosome. The protein resides in the centromere. The protein localises to the kinetochore. It catalyses the reaction L-seryl-[protein] + ATP = O-phospho-L-seryl-[protein] + ADP + H(+). The enzyme catalyses L-threonyl-[protein] + ATP = O-phospho-L-threonyl-[protein] + ADP + H(+). Serine/threonine-protein kinase essential for spindle-assembly checkpoint signaling. Plays a key role in the recruitment of the checkpoint proteins bub-3, mdf-1 and mdf-2 to unattached kinetochores. mdf-1 recruitment is independent of bub-1 kinase activity. Has a role in the correct kinetochore localization of the spindly-like protein spdl-1. In addition, during meiotic anaphase I, controls the recruitment of hcp-1/2 and klp-19 to the ring-shaped domain formed between chromosomes. Involved in chromosome alignment, chromosome homolog segregation and spindle assembly. In association with bub-3 at the kinetochore region of chromosomes, promotes the onset on anaphase independently from spindle checkpoint signaling and promotes the formation of stable end-on bipolar attachments of chromosomes. Plays a role in nuclear envelope breakdown. Required maternally during embryogenesis and in the zygote for the postembryonic development of several tissues including ventral cord neurons, gonad, intestine and seam cells. In Caenorhabditis elegans, this protein is Mitotic checkpoint serine/threonine-protein kinase bub-1.